A 141-amino-acid polypeptide reads, in one-letter code: Large ribosomal subunit protein uL11 (141 aa).

Belongs to the universal ribosomal protein uL11 family. In terms of assembly, part of the ribosomal stalk of the 50S ribosomal subunit. Interacts with L10 and the large rRNA to form the base of the stalk. L10 forms an elongated spine to which L12 dimers bind in a sequential fashion forming a multimeric L10(L12)X complex. One or more lysine residues are methylated.

Forms part of the ribosomal stalk which helps the ribosome interact with GTP-bound translation factors. This Prochlorococcus marinus (strain SARG / CCMP1375 / SS120) protein is Large ribosomal subunit protein uL11.